A 98-amino-acid chain; its full sequence is ATP synthase subunit c (98 aa).

2 helical membrane passes run 27–47 and 73–93; these read ALAL…GLGL and IIGA…FFVV.

This sequence belongs to the ATPase C chain family. As to quaternary structure, F-type ATPases have 2 components, F(1) - the catalytic core - and F(0) - the membrane proton channel. F(1) has five subunits: alpha(3), beta(3), gamma(1), delta(1), epsilon(1). F(0) has three main subunits: a(1), b(2) and c(10-14). The alpha and beta chains form an alternating ring which encloses part of the gamma chain. F(1) is attached to F(0) by a central stalk formed by the gamma and epsilon chains, while a peripheral stalk is formed by the delta and b chains.

The protein resides in the cell inner membrane. Functionally, f(1)F(0) ATP synthase produces ATP from ADP in the presence of a proton or sodium gradient. F-type ATPases consist of two structural domains, F(1) containing the extramembraneous catalytic core and F(0) containing the membrane proton channel, linked together by a central stalk and a peripheral stalk. During catalysis, ATP synthesis in the catalytic domain of F(1) is coupled via a rotary mechanism of the central stalk subunits to proton translocation. Key component of the F(0) channel; it plays a direct role in translocation across the membrane. A homomeric c-ring of between 10-14 subunits forms the central stalk rotor element with the F(1) delta and epsilon subunits. This Protochlamydia amoebophila (strain UWE25) protein is ATP synthase subunit c.